Consider the following 243-residue polypeptide: Precursor of CEP9 (243 aa).

Positions 1–26 are cleaved as a signal peptide; sequence MKLLSITLTSIVISMVFYQTPITTEA. Residues 28 to 44 constitute a propeptide that is removed on maturation; that stretch reads SLRKTNDQDHFKAGFTD. 3 disordered regions span residues 42–63, 91–173, and 189–243; these read FTDD…KKGN, KTGS…VKGF, and NGQD…EPKA. P48 carries the post-translational modification Hydroxyproline; partial. At P51 the chain carries Hydroxyproline. P55 is modified (hydroxyproline; partial). A propeptide spanning residues 60–96 is cleaved from the precursor; that stretch reads KKGNVNVEGFQDDFKPTEGRKLLKTNVQDHFKTGSTD. P100, P103, and P107 each carry hydroxyproline. The propeptide occupies 112–148; it reads KKGNVNVESSEDDFKHKEGRKLQQTNGQNHFKTGSTD. Polar residues predominate over residues 133-147; the sequence is LQQTNGQNHFKTGST. A hydroxyproline mark is found at P152, P155, and P159. A propeptide spanning residues 164–200 is cleaved from the precursor; that stretch reads KKGHANVKGFKDDFAPTEEIRLQKMNGQDHFKTGSTD. 3 positions are modified to hydroxyproline: P204, P207, and P211. A propeptide spanning residues 216–219 is cleaved from the precursor; that stretch reads KKGD. Hydroxyproline occurs at positions 223, 226, and 230. Positions 235-243 are excised as a propeptide; that stretch reads AVKNDEPKA.

The protein belongs to the C-terminally encoded plant signaling peptide (CEP) family. As to quaternary structure, interacts with CEP receptors (e.g. CEPR1 and CEPR2). In terms of processing, hydroxylated peptide is more active than non-hydroxylated peptide. Post-translationally, the mature small signaling peptide is generated by proteolytic processing of the longer precursor. Expressed in lateral root primordia and in lateral roots excluding the meristem region. Also present in the aerial tissues, such as leaf petioles and the shoot apex region.

The protein resides in the secreted. The protein localises to the extracellular space. It is found in the apoplast. Its function is as follows. Extracellular signaling peptide that represses primary root growth rate and significantly inhibits lateral root formation. Modulates leaf morphology. Regulates systemic nitrogen (N)-demand signaling. Mediates up-regulation of genes involved in N uptake and assimilation pathways. In Arabidopsis thaliana (Mouse-ear cress), this protein is Precursor of CEP9.